Reading from the N-terminus, the 305-residue chain is MSAQVMHNRVMGTVKDSASKLVDFLMRHHGQTVLLTGAGVSTDSGIPDYRGPQGIYSRNKDFKPIQYQQFVGPHEFRQRYWARSFLGWPKVSQAQPNASHHAIAALESRSHIAGCITQNVDGLHRRAVVIENPNLLEIHGTLHWVNCISCGYKLQRSAMQEQLQKINPIVYEWQRLNPEKSNADVASSLNPDGDVEIKWDYNHFKYPHCPECNGLLKPNVVFFGENMPMTVRDTSFKMIDDAKALLVVGSSLQVYSALRLVKRAASTGKPIAILNLGFTRGDELAQIRINLGSSAVLEELASTIR.

The transit peptide at 1–10 directs the protein to the mitochondrion; sequence MSAQVMHNRV. In terms of domain architecture, Deacetylase sirtuin-type spans 11-305; sequence MGTVKDSASK…VLEELASTIR (295 aa). NAD(+) contacts are provided by residues 37–57 and 118–121; these read GAGV…GIYS and QNVD. Residue histidine 139 is the Proton acceptor of the active site. 4 residues coordinate Zn(2+): cysteine 147, cysteine 150, cysteine 209, and cysteine 212. Residues 249–251, 275–277, and serine 293 contribute to the NAD(+) site; these read GSS and NLG.

Belongs to the sirtuin family. Class II subfamily. It depends on Zn(2+) as a cofactor.

The protein localises to the mitochondrion matrix. The catalysed reaction is N(6)-acetyl-L-lysyl-[protein] + NAD(+) + H2O = 2''-O-acetyl-ADP-D-ribose + nicotinamide + L-lysyl-[protein]. Functionally, NAD-dependent protein deacylase. Catalyzes the NAD-dependent hydrolysis of acyl groups from lysine residues. The sequence is that of NAD-dependent protein deacylase SIR4 from Batrachochytrium dendrobatidis (strain JAM81 / FGSC 10211) (Frog chytrid fungus).